A 344-amino-acid polypeptide reads, in one-letter code: Cinnamoyl-CoA reductase 1 (344 aa).

Serine 7 is modified (phosphoserine). Residues 17 to 23 (GAGGYIA), arginine 42, lysine 48, 68 to 69 (DL), 88 to 90 (TAS), tyrosine 161, lysine 165, 188 to 191 (PVLV), and serine 203 contribute to the NADP(+) site. The cysteines at positions 154 and 162 are disulfide-linked. Lysine 165 functions as the Proton donor in the catalytic mechanism. The tract at residues 317–344 (QEKGHLAPPPPPPSASQESVENGIKIGS) is disordered.

Belongs to the NAD(P)-dependent epimerase/dehydratase family. Dihydroflavonol-4-reductase subfamily. Expressed in leaves, stems and flowers.

It carries out the reaction (E)-cinnamaldehyde + NADP(+) + CoA = (E)-cinnamoyl-CoA + NADPH + H(+). It functions in the pathway aromatic compound metabolism; phenylpropanoid biosynthesis. Its function is as follows. Involved in the latter stages of lignin biosynthesis. Catalyzes one of the last steps of monolignol biosynthesis, the conversion of cinnamoyl-CoAs into their corresponding cinnamaldehydes. This chain is Cinnamoyl-CoA reductase 1, found in Arabidopsis thaliana (Mouse-ear cress).